A 984-amino-acid polypeptide reads, in one-letter code: Mast/stem cell growth factor receptor Kit (984 aa).

The first 21 residues, 1–21, serve as a signal peptide directing secretion; the sequence is MEYHWILLCVSLCFTFHPGDT. Residues 22-514 are Extracellular-facing; it reads KPTITPAGTY…RTISHDLFSP (493 aa). Ig-like C2-type domains are found at residues 23-97, 98-197, 203-300, 311-395, and 398-498; these read PTIT…ERAS, IYIY…LTVR, PPVI…VWLD, PVNN…ASVN, and FTIF…QAFT. Cystine bridges form between C44/C87, C129/C178, C144/C175, and C226/C284. N227, N260, N314, N351, N395, N448, and N476 each carry an N-linked (GlcNAc...) asparagine glycan. Residues C421 and C487 are joined by a disulfide bond. The chain crosses the membrane as a helical span at residues 515–535; the sequence is LLIGSVSAACILCLILIVLFY. At 536-984 the chain is on the cytoplasmic side; the sequence is KYMQKPKYQI…GTEPFRVQRV (449 aa). Residue Y558 participates in Mg(2+) binding. Phosphotyrosine; by autocatalysis is present on residues Y558 and Y560. The Protein kinase domain maps to 579 to 926; it reads LRFGKTLGSG…LSDTTKHIYL (348 aa). ATP-binding positions include 586–593, K613, and 661–667; these read GSGAFGKV and EYCCFGD. Phosphotyrosine; by autocatalysis is present on residues Y690 and Y707. Residues 711-723 are compositionally biased toward low complexity; the sequence is RPSAAGKPSSSSS. A disordered region spans residues 711-749; the sequence is RPSAAGKPSSSSSSEKRRSLREGSPYVEEDSESEMFDED. The segment covering 737–749 has biased composition (acidic residues); the sequence is VEEDSESEMFDED. D781 serves as the catalytic Proton acceptor. R785 is an ATP binding site. The Mg(2+) site is built by N786 and D799. Residues Y812 and Y925 each carry the phosphotyrosine; by autocatalysis modification. The disordered stretch occupies residues 936–963; that stretch reads PRGREESSTHSMASQPFNSAGNNSPPSR. The span at 944-960 shows a compositional bias: polar residues; that stretch reads THSMASQPFNSAGNNSP.

The protein belongs to the protein kinase superfamily. Tyr protein kinase family. CSF-1/PDGF receptor subfamily. In terms of processing, ubiquitinated. Rapidly ubiquitinated after autophosphorylation induced by kitlg/scf binding, leading to internalization and degradation. Post-translationally, autophosphorylated on tyrosine residues. Phosphorylated tyrosine residues are important for interaction with specific binding partners.

The protein resides in the cell membrane. It carries out the reaction L-tyrosyl-[protein] + ATP = O-phospho-L-tyrosyl-[protein] + ADP + H(+). Its function is as follows. Tyrosine-protein kinase that acts as a cell-surface receptor for the cytokine kitlg/scf and plays an essential role in the regulation of cell survival and proliferation, hematopoiesis, stem cell maintenance, gametogenesis, mast cell development, migration and function, and in melanogenesis. In Takifugu rubripes (Japanese pufferfish), this protein is Mast/stem cell growth factor receptor Kit (kit).